The primary structure comprises 448 residues: Maltoporin (448 aa).

The N-terminal stretch at Met-1–Ala-25 is a signal peptide.

The protein belongs to the porin LamB (TC 1.B.3) family. In terms of assembly, homotrimer formed of three 18-stranded antiparallel beta-barrels, containing three independent channels.

The protein localises to the cell outer membrane. The catalysed reaction is beta-maltose(in) = beta-maltose(out). In terms of biological role, involved in the transport of maltose and maltodextrins. This Cronobacter sakazakii (strain ATCC BAA-894) (Enterobacter sakazakii) protein is Maltoporin.